The chain runs to 380 residues: Probable peptidoglycan glycosyltransferase FtsW (380 aa).

10 helical membrane passes run Leu-14–Ile-34, Ile-52–Phe-72, Ile-79–His-99, Met-112–Ser-131, Phe-141–Glu-161, Pro-162–Gly-182, Phe-188–Tyr-208, Ile-268–Ile-288, Ile-304–Ile-324, and Pro-341–Ile-361.

The protein belongs to the SEDS family. FtsW subfamily.

The protein resides in the cell membrane. It catalyses the reaction [GlcNAc-(1-&gt;4)-Mur2Ac(oyl-L-Ala-gamma-D-Glu-L-Lys-D-Ala-D-Ala)](n)-di-trans,octa-cis-undecaprenyl diphosphate + beta-D-GlcNAc-(1-&gt;4)-Mur2Ac(oyl-L-Ala-gamma-D-Glu-L-Lys-D-Ala-D-Ala)-di-trans,octa-cis-undecaprenyl diphosphate = [GlcNAc-(1-&gt;4)-Mur2Ac(oyl-L-Ala-gamma-D-Glu-L-Lys-D-Ala-D-Ala)](n+1)-di-trans,octa-cis-undecaprenyl diphosphate + di-trans,octa-cis-undecaprenyl diphosphate + H(+). Its pathway is cell wall biogenesis; peptidoglycan biosynthesis. In terms of biological role, peptidoglycan polymerase that is essential for cell division. The protein is Probable peptidoglycan glycosyltransferase FtsW of Buchnera aphidicola subsp. Baizongia pistaciae (strain Bp).